The sequence spans 403 residues: Tryptophan synthase beta chain 1 (403 aa).

An N6-(pyridoxal phosphate)lysine modification is found at Lys-93.

Belongs to the TrpB family. Tetramer of two alpha and two beta chains. Pyridoxal 5'-phosphate serves as cofactor.

It catalyses the reaction (1S,2R)-1-C-(indol-3-yl)glycerol 3-phosphate + L-serine = D-glyceraldehyde 3-phosphate + L-tryptophan + H2O. Its pathway is amino-acid biosynthesis; L-tryptophan biosynthesis; L-tryptophan from chorismate: step 5/5. Its function is as follows. The beta subunit is responsible for the synthesis of L-tryptophan from indole and L-serine. In Methanosarcina acetivorans (strain ATCC 35395 / DSM 2834 / JCM 12185 / C2A), this protein is Tryptophan synthase beta chain 1 (trpB1).